The primary structure comprises 314 residues: Mitochondrial thiamine pyrophosphate carrier 1 (314 aa).

A run of 6 helical transmembrane segments spans residues 14 to 30 (VAAW…GLLA), 84 to 100 (LLYV…YSLF), 116 to 136 (LVVG…FDVL), 170 to 186 (GSIA…SIMF), 217 to 233 (SAGT…TFPL), and 285 to 302 (GILV…VSFW). Solcar repeat units lie at residues 14-103 (VAAW…FNRY), 110-195 (EARL…IRIY), and 210-310 (ELAT…AIHY).

The protein belongs to the mitochondrial carrier (TC 2.A.29) family.

It localises to the mitochondrion inner membrane. Its function is as follows. Mitochondrial transporter that mediates uptake of thiamine pyrophosphate (ThPP) into mitochondria. This is Mitochondrial thiamine pyrophosphate carrier 1 (TPC1) from Saccharomyces cerevisiae (strain ATCC 204508 / S288c) (Baker's yeast).